Consider the following 378-residue polypeptide: Histidine decarboxylase (378 aa).

Residue His120 participates in substrate binding. N6-(pyridoxal phosphate)lysine is present on Lys233. Residue Ser323 is part of the active site.

This sequence belongs to the group II decarboxylase family. In terms of assembly, homotetramer. Pyridoxal 5'-phosphate is required as a cofactor.

The enzyme catalyses L-histidine + H(+) = histamine + CO2. The sequence is that of Histidine decarboxylase (hdc) from Morganella morganii (Proteus morganii).